Reading from the N-terminus, the 368-residue chain is MTVKLTIDCMGGDHGPSVTVPAAVKFVRAHPDAHLMLVGIESAIRAQLKKLKALDDPALTIVPATEVVAMDDPVEVALRKKKDSSMRVALNQVKEGAAQACISAGNTGALMAVSRYVLKTLPGIERPAIAFALPNPTGYTMMLDLGANVDCEPQHLLQFAEMGHALVAALEGKERPTIGLLNIGEEVIKGNETIKRAGELLRASTLNFRGNVEGNDIYKGTVDVIVCDGFVGNVALKTSEGLAQMLSDIIREEFGRSLMSKLMALLALPVLMRFKKRVDHRQYNGAALLGLKGLVIKSHGSADAYAFEWAIKRGYDAVKNGVLERLARAMADNSVSLGDGGHDAGGAGTASPAPGHHAEPSAAQSSKA.

Residues 338 to 368 form a disordered region; it reads GDGGHDAGGAGTASPAPGHHAEPSAAQSSKA.

It belongs to the PlsX family. In terms of assembly, homodimer. Probably interacts with PlsY.

It localises to the cytoplasm. It carries out the reaction a fatty acyl-[ACP] + phosphate = an acyl phosphate + holo-[ACP]. It functions in the pathway lipid metabolism; phospholipid metabolism. In terms of biological role, catalyzes the reversible formation of acyl-phosphate (acyl-PO(4)) from acyl-[acyl-carrier-protein] (acyl-ACP). This enzyme utilizes acyl-ACP as fatty acyl donor, but not acyl-CoA. This chain is Phosphate acyltransferase, found in Burkholderia ambifaria (strain MC40-6).